Reading from the N-terminus, the 627-residue chain is Coiled-coil domain-containing protein 22 (627 aa).

Residues 1–321 (MEEADRILIH…VADVPATSQR (321 aa)) form a sufficient for interaction with COMMD1 region. Residues 1–447 (MEEADRILIH…LQDCRELESS (447 aa)) are sufficicient and required for interaction with CCDC93. Residue serine 410 is modified to Phosphoserine. Positions 448–535 (RRLAEIQELH…NSLSGKLDRT (88 aa)) form a coiled coil.

The protein belongs to the CCDC22 family. In terms of assembly, component of the commander complex consisting of the CCC subcomplex and the retriever subcomplex. Component of the CCC (COMMD/CCDC22/CCDC93) subcomplex consisting of COMMD1, COMMD2, COMMD3, COMMD4, COMMD5, COMMD6, COMMD7, COMMD8, COMMD9, COMMD10, CCDC22 and CCDC93. Forms a coiled-coil heterodimer with CCDC22; this heterodimer interacts with the guanine nucleotide exchange factor DENND10; the interaction is direct. Interacts with CUL1, CUL2, CUL3, SKP1, BTRC. Interacts with SNX17 and SNX31. Interacts with CPNE1 and CPNE4.

It localises to the endosome. It is found in the cytoplasm. The protein localises to the cytoskeleton. Its subcellular location is the microtubule organizing center. The protein resides in the centrosome. Its function is as follows. Component of the commander complex that is essential for endosomal recycling of transmembrane cargos; the Commander complex is composed of composed of the CCC subcomplex and the retriever subcomplex. Component of the CCC complex, which is involved in the regulation of endosomal recycling of surface proteins, including integrins, signaling receptor and channels. Involved in regulation of NF-kappa-B signaling. Promotes ubiquitination of I-kappa-B-kinase subunit IKBKB and its subsequent proteasomal degradation leading to NF-kappa-B activation; the function may involve association with COMMD8 and a CUL1-dependent E3 ubiquitin ligase complex. May down-regulate NF-kappa-B activity via association with COMMD1 and involving a CUL2-dependent E3 ubiquitin ligase complex. Regulates the cellular localization of COMM domain-containing proteins, such as COMMD1 and COMMD10. Component of the CCC complex, which is involved in the regulation of endosomal recycling of surface proteins, including integrins, signaling receptor and channels. The CCC complex associates with SNX17, retriever and WASH complexes to prevent lysosomal degradation and promote cell surface recycling of numerous cargos such as integrins ITGA5:ITGB1. Plays a role in copper ion homeostasis. Involved in copper-dependent ATP7A trafficking between the trans-Golgi network and vesicles in the cell periphery; the function is proposed to depend on its association within the CCC complex and cooperation with the WASH complex on early endosomes. The chain is Coiled-coil domain-containing protein 22 (Ccdc22) from Mus musculus (Mouse).